A 304-amino-acid chain; its full sequence is Glutaminase (304 aa).

7 residues coordinate substrate: S61, N113, E158, N165, Y189, Y240, and V258.

The protein belongs to the glutaminase family. Homotetramer.

The enzyme catalyses L-glutamine + H2O = L-glutamate + NH4(+). In Fusobacterium nucleatum subsp. nucleatum (strain ATCC 25586 / DSM 15643 / BCRC 10681 / CIP 101130 / JCM 8532 / KCTC 2640 / LMG 13131 / VPI 4355), this protein is Glutaminase.